Here is a 104-residue protein sequence, read N- to C-terminus: Urease subunit gamma (104 aa).

Belongs to the urease gamma subunit family. Heterotrimer of UreA (gamma), UreB (beta) and UreC (alpha) subunits. Three heterotrimers associate to form the active enzyme.

It is found in the cytoplasm. It catalyses the reaction urea + 2 H2O + H(+) = hydrogencarbonate + 2 NH4(+). Its pathway is nitrogen metabolism; urea degradation; CO(2) and NH(3) from urea (urease route): step 1/1. The sequence is that of Urease subunit gamma from Actinomyces naeslundii.